The following is a 495-amino-acid chain: ATP synthase subunit beta, chloroplastic (495 aa).

Position 172–179 (172–179 (GGAGVGKT)) interacts with ATP.

Belongs to the ATPase alpha/beta chains family. As to quaternary structure, F-type ATPases have 2 components, CF(1) - the catalytic core - and CF(0) - the membrane proton channel. CF(1) has five subunits: alpha(3), beta(3), gamma(1), delta(1), epsilon(1). CF(0) has four main subunits: a(1), b(1), b'(1) and c(9-12).

It is found in the plastid. The protein localises to the chloroplast thylakoid membrane. The enzyme catalyses ATP + H2O + 4 H(+)(in) = ADP + phosphate + 5 H(+)(out). In terms of biological role, produces ATP from ADP in the presence of a proton gradient across the membrane. The catalytic sites are hosted primarily by the beta subunits. This is ATP synthase subunit beta, chloroplastic from Scilla messeniaca (Greek squill).